Reading from the N-terminus, the 51-residue chain is Ribosome biogenesis protein Nop10 (51 aa).

This sequence belongs to the NOP10 family.

Functionally, involved in ribosome biogenesis; more specifically in 18S rRNA pseudouridylation and in cleavage of pre-rRNA. The polypeptide is Ribosome biogenesis protein Nop10 (Methanococcus maripaludis (strain C5 / ATCC BAA-1333)).